Here is a 446-residue protein sequence, read N- to C-terminus: Indoleacetamide hydrolase (446 aa).

Catalysis depends on charge relay system residues lysine 71 and serine 146. Serine 170 (acyl-ester intermediate) is an active-site residue.

It belongs to the amidase family.

The protein operates within plant hormone metabolism; auxin biosynthesis. Its function is as follows. Hydrolyzes indole-3-acetamide (IAM) into indole-3-acetic acid (IAA). This is Indoleacetamide hydrolase (iaaH) from Pseudomonas syringae pv. syringae.